Reading from the N-terminus, the 430-residue chain is MSEGNQPKRVLGLPDVDPSQQDTFETPDPPESISNLADESSELVNESIDRSSLKPAKSHLKFANRKFNNDNEDFSDSIYKKSVPRTGGLLKNQTVFDILPSDESKVETPLQKFQRLQYEVMSFREEMQVIADNGGEVEKDIKGVDLTHQLADLQNQLSHLLENEKLQPILDENKQVIHYSQIQNNSSKKLISEIESFTQQSLSSSTTEQNTQQPSNNNTTTNITSSSSITPNHVTYELFYTGEQSKSQQLQRIQDLEKRLAKLETATGNKTTDSVPITQSILEIKEKLSLLDTTKIDVLQQKMKTVSKEMESLKIQDETSTKALTTNEKKINDIFETMNKWDIVGQQVPAIINRLYTLRSLHEEGISFSNHVSNLEKQQNDITSLLISNSSLMNKMDDSFKSNLLTIKSNIQQLESRIETLQNRQQQQQQ.

Disordered regions lie at residues 1–51 and 201–228; these read MSEG…IDRS and SLSS…SSSS. The segment covering 32–44 has biased composition (polar residues); that stretch reads SISNLADESSELV. 2 coiled-coil regions span residues 241–319 and 397–430; these read TGEQ…QDET and DDSF…QQQQ.

This sequence belongs to the dynactin subunit 2 family. Subunit of dynactin, a multiprotein complex associated with dynein.

Its subcellular location is the cytoplasm. It is found in the cytoskeleton. The protein localises to the membrane. In terms of biological role, modulates cytoplasmic dynein binding to an organelle, and plays a role in prometaphase chromosome alignment and spindle organization during mitosis. The chain is Dynactin subunit 2 (dynB) from Dictyostelium discoideum (Social amoeba).